The sequence spans 100 residues: Large ribosomal subunit protein uL23 (100 aa).

Belongs to the universal ribosomal protein uL23 family. In terms of assembly, part of the 50S ribosomal subunit. Contacts protein L29, and trigger factor when it is bound to the ribosome.

Its function is as follows. One of the early assembly proteins it binds 23S rRNA. One of the proteins that surrounds the polypeptide exit tunnel on the outside of the ribosome. Forms the main docking site for trigger factor binding to the ribosome. This is Large ribosomal subunit protein uL23 from Vibrio campbellii (strain ATCC BAA-1116).